Here is a 784-residue protein sequence, read N- to C-terminus: Toll-like receptor 2 (784 aa).

The first 20 residues, 1–20, serve as a signal peptide directing secretion; that stretch reads MPRALWTAWVWAVIILSMEG. Residues 21 to 587 lie on the Extracellular side of the membrane; sequence ASHQASSLSC…ARLSLSECHR (567 aa). Cysteines 30 and 36 form a disulfide. LRR repeat units follow at residues 54-77, 78-101, 102-125, 126-150, 151-175, 176-199, 200-223, 224-250, 251-278, 279-308, 309-337, 338-361, 362-388, 389-414, 415-437, 438-457, 458-478, 479-500, and 501-524; these read VKSLDLSNNEITYVSNRDLQRCVN, LKTLRLGANEIHTVEEDSFFHLRN, LEYLDLSYNRLSNLSSSWFRSLYA, LKFLNLLGNVYKTLGETSLFSHLPN, LRTLKVGNSNSFTEIHEKDFTGLIF, LEELEISAQNLQIYVPKSLKSIQN, ISHLILHLKQPVLLVDILVDIVSS, LDCLELRDTNLHTFHFSEASISEMNTS, VKKLIFRNVQFTDESFVEVVKLFNYVSG, ILEVEFDDCTHDGIGDFRALSLDRIRHLGN, VETLTIRKLHIPQFFLFHDLSSIYPLTGK, VKRVTIESSKVFLVPCLLSQHLKS, LEYLDLSENLMSEETLKNSACKDAWPF, LQTLVLRQNRLKSLEKTGELLLTLEN, LNNLDISKNNFLSMPETCRWPGK, MKQLNLSSTRVHSLTQCLPQ, TLEILDVSNNNLDSFSLILPQ, LKELYISRNKLKTLPDASFLPV, and LSVMRISRNIINTFSKEQLDSFQQ. Residue Asn114 is glycosylated (N-linked (GlcNAc...) asparagine). N-linked (GlcNAc...) asparagine glycosylation is present at Asn199. Asn248 is a glycosylation site (N-linked (GlcNAc...) asparagine). A disulfide bond links Cys353 and Cys382. Cysteines 432 and 454 form a disulfide. Asn442 carries an N-linked (GlcNAc...) asparagine glycan. An LRRCT domain is found at 525 to 579; it reads LKTLEAGGNNFICSCDFLSFTQGQQALGRVLVDWPAEYRCDSPSHVRGQRVQDAR. Residues 588–608 form a helical membrane-spanning segment; that stretch reads AAVVSAACCALFLLLLLTGVL. Over 609 to 784 the chain is Cytoplasmic; it reads CHRFHGLWYM…WLNLRAAIRS (176 aa). Residues 639 to 782 enclose the TIR domain; it reads ICYDAFVSYS…GFWLNLRAAI (144 aa). Lys754 participates in a covalent cross-link: Glycyl lysine isopeptide (Lys-Gly) (interchain with G-Cter in ubiquitin). The ATG16L1-binding motif signature appears at 761-778; it reads YLEWPVDETQQEGFWLNL.

The protein belongs to the Toll-like receptor family. In terms of assembly, interacts with LY96, TLR1 and TLR6 (via extracellular domain). TLR2 seems to exist in heterodimers with either TLR1 or TLR6 before stimulation by the ligand. The heterodimers form bigger oligomers in response to their corresponding ligands as well as further heterotypic associations with other receptors such as CD14 and/or CD36. Binds MYD88 (via TIR domain). Interacts with TICAM1. Interacts with CNPY3. Interacts with ATG16L1. Interacts with PPP1R11. Interacts with TICAM2. Interacts with TIRAP. Ubiquitinated at Lys-754 by PPP1R11, leading to its degradation. Deubiquitinated by USP2. Post-translationally, glycosylation of Asn-442 is critical for secretion of the N-terminal ectodomain of TLR2.

The protein resides in the membrane. The protein localises to the cytoplasmic vesicle. Its subcellular location is the phagosome membrane. It is found in the membrane raft. Its function is as follows. Cooperates with LY96 to mediate the innate immune response to bacterial lipoproteins and other microbial cell wall components. Cooperates with TLR1 or TLR6 to mediate the innate immune response to bacterial lipoproteins or lipopeptides. Acts via MYD88 and TRAF6, leading to NF-kappa-B activation, cytokine secretion and the inflammatory response. May also promote apoptosis in response to lipoproteins. Forms activation clusters composed of several receptors depending on the ligand, these clusters trigger signaling from the cell surface and subsequently are targeted to the Golgi in a lipid-raft dependent pathway. Forms the cluster TLR2:TLR6:CD14:CD36 in response to diacylated lipopeptides and TLR2:TLR1:CD14 in response to triacylated lipopeptides. The chain is Toll-like receptor 2 (TLR2) from Bubalus bubalis (Domestic water buffalo).